The primary structure comprises 718 residues: MAEYLRLPHSLAMIRLCNPPVNAISPTVITEVRNGLQKASLDHTVRAIVICGANDNFCAGADIHGFKSPTGLTLGSLVDEIQRYQKPVVAAIQGVALGGGLELALGCHYRIANAKARVGFPEVMLGILPGARGTQLLPRVVGVPVALDLITSGRHISTDEALKLGILDVVVKSDPVEEAIKFAQTVIGKPIEPRRILNKPVPSLPNMDSVFAEAIAKVRKQYPGRLAPETCVRSVQASVKHPYEVAIKEEAKLFMYLRGSGQARALQYAFFAEKSANKWSTPSGASWKTASAQPVSSVGVLGLGTMGRGIAISFARVGIPVVAVESDPKQLDTAKKIITSTLEKEASKSGQASAKPNLRFSSSTKELSSVDLVIEAVFEDMNLKKKVFAELSALCKPGAFLCTNTSALDVDDIASSTDRPQLVIGTHFFSPAHIMRLLEVIPSRYSSPTTIATVMSLSKRIGKIGVVVGNCYGFVGNRMLAPYYNQGYFLIEEGSKPEDVDGVLEEFGFRMGPFRVSDLAGLDVGWKVRKGQGLTGPSLPPGTPTRKRGNTRYSPIADMLCEAGRFGQKTGKGWYQYDKPLGRIHKPDPWLSEFLSQYRETHHIKQRSISKEEILERCLYSLINEAFRILEEGMAASPEHIDVIYLHGYGWPRHVGGPMYYAASVGLPTVLEKLQKYYRQNPDIPQLEPSDYLRRLVAQGSPPLKEWQSLAGPHSSKL.

The interval 1-280 (MAEYLRLPHS…FAEKSANKWS (280 aa)) is enoyl-CoA hydratase / isomerase. Lys-38 bears the N6-succinyllysine mark. A substrate-binding site is contributed by Gly-99. N6-acetyllysine; alternate is present on residues Lys-163 and Lys-172. 2 positions are modified to N6-succinyllysine; alternate: Lys-163 and Lys-172. At Lys-181 the chain carries N6-succinyllysine. Lys-189 and Lys-217 each carry N6-acetyllysine; alternate. An N6-succinyllysine; alternate mark is found at Lys-189 and Lys-217. The residue at position 240 (Lys-240) is an N6-succinyllysine. Position 248 is an N6-acetyllysine (Lys-248). Position 252 is an N6-succinyllysine (Lys-252). Lys-274 carries the N6-acetyllysine; alternate modification. Lys-274 is modified (N6-succinyllysine; alternate). N6-succinyllysine is present on residues Lys-278, Lys-288, and Lys-329. Positions 281-567 (TPSGASWKTA…DMLCEAGRFG (287 aa)) are 3-hydroxyacyl-CoA dehydrogenase. N6-acetyllysine occurs at positions 344, 348, 355, and 459. Lys-527 carries the post-translational modification N6-succinyllysine. Residue Thr-543 is modified to Phosphothreonine. Lys-572 carries the N6-succinyllysine modification. Lys-579, Lys-586, and Lys-705 each carry N6-acetyllysine; alternate. 3 positions are modified to N6-succinyllysine; alternate: Lys-579, Lys-586, and Lys-705. Positions 716–718 (SKL) match the Microbody targeting signal motif. Lys-717 is subject to N6-succinyllysine.

The protein in the N-terminal section; belongs to the enoyl-CoA hydratase/isomerase family. This sequence in the C-terminal section; belongs to the 3-hydroxyacyl-CoA dehydrogenase family. Monomer. In terms of processing, acetylated, leading to enhanced enzyme activity. Acetylation is enhanced by up to 80% after treatment either with trichostin A (TCA) or with nicotinamide (NAM) with highest increase on Lys-344. Acetylation and enzyme activity increased by about 1.5% on addition of fatty acids.

The protein localises to the peroxisome. The catalysed reaction is a (3S)-3-hydroxyacyl-CoA = a (2E)-enoyl-CoA + H2O. It carries out the reaction a 4-saturated-(3S)-3-hydroxyacyl-CoA = a (3E)-enoyl-CoA + H2O. The enzyme catalyses a (3Z)-enoyl-CoA = a 4-saturated (2E)-enoyl-CoA. It catalyses the reaction a (3E)-enoyl-CoA = a 4-saturated (2E)-enoyl-CoA. The catalysed reaction is a (3S)-3-hydroxyacyl-CoA + NAD(+) = a 3-oxoacyl-CoA + NADH + H(+). It carries out the reaction (2S,3S)-3-hydroxy-2-methylbutanoyl-CoA = (2E)-2-methylbut-2-enoyl-CoA + H2O. The enzyme catalyses (2E)-dodecenedioyl-CoA + H2O = (3S)-hydroxydodecanedioyl-CoA. It catalyses the reaction (3S)-hydroxydodecanedioyl-CoA + NAD(+) = 3-oxododecanedioyl-CoA + NADH + H(+). The catalysed reaction is (2E)-octenedioyl-CoA + H2O = (3S)-hydroxyoctanedioyl-CoA. It carries out the reaction (3S)-hydroxyoctanedioyl-CoA + NAD(+) = 3-oxooctanedioyl-CoA + NADH + H(+). The enzyme catalyses (2E)-decenedioyl-CoA + H2O = (3S)-hydroxydecanedioyl-CoA. It catalyses the reaction (3S)-hydroxydecanedioyl-CoA + NAD(+) = 3-oxodecanedioyl-CoA + NADH + H(+). The catalysed reaction is (2E)-tetradecenedioyl-CoA + H2O = (3S)-hydroxytetradecanedioyl-CoA. It carries out the reaction (3S)-hydroxytetradecanedioyl-CoA + NAD(+) = 3-oxotetradecanedioyl-CoA + NADH + H(+). The enzyme catalyses (3E,5Z)-tetradecadienoyl-CoA = (2E,5Z)-tetradecadienoyl-CoA. It catalyses the reaction (3E,5Z)-octadienoyl-CoA = (2E,5Z)-octadienoyl-CoA. The catalysed reaction is (3S)-hydroxydecanoyl-CoA + NAD(+) = 3-oxodecanoyl-CoA + NADH + H(+). It carries out the reaction (3E)-decenoyl-CoA = (2E)-decenoyl-CoA. The enzyme catalyses (3Z)-hexenoyl-CoA = (2E)-hexenoyl-CoA. It catalyses the reaction (3E)-hexenoyl-CoA = (2E)-hexenoyl-CoA. The catalysed reaction is (3S)-hydroxydecanoyl-CoA = (2E)-decenoyl-CoA + H2O. It carries out the reaction (3S)-hydroxyhexanoyl-CoA = (2E)-hexenoyl-CoA + H2O. The enzyme catalyses (3S)-hydroxyhexadecanoyl-CoA + NAD(+) = 3-oxohexadecanoyl-CoA + NADH + H(+). It catalyses the reaction (3S)-hydroxyhexadecanoyl-CoA = (2E)-hexadecenoyl-CoA + H2O. The catalysed reaction is (2E)-hexadecenedioyl-CoA + H2O = (3S)-hydroxyhexadecanedioyl-CoA. It carries out the reaction (3S)-hydroxyhexadecanedioyl-CoA + NAD(+) = 3-oxohexadecanedioyl-CoA + NADH + H(+). The protein operates within lipid metabolism; fatty acid beta-oxidation. With respect to regulation, enzyme activity enhanced by acetylation. In terms of biological role, peroxisomal trifunctional enzyme possessing 2-enoyl-CoA hydratase, 3-hydroxyacyl-CoA dehydrogenase, and delta 3, delta 2-enoyl-CoA isomerase activities. Catalyzes two of the four reactions of the long chain fatty acids peroxisomal beta-oxidation pathway. Can also use branched-chain fatty acids such as 2-methyl-2E-butenoyl-CoA as a substrate, which is hydrated into (2S,3S)-3-hydroxy-2-methylbutanoyl-CoA. Optimal isomerase for 2,5 double bonds into 3,5 form isomerization in a range of enoyl-CoA species. Also able to isomerize both 3-cis and 3-trans double bonds into the 2-trans form in a range of enoyl-CoA species. With HSD17B4, catalyzes the hydration of trans-2-enoyl-CoA and the dehydrogenation of 3-hydroxyacyl-CoA, but with opposite chiral specificity. Regulates the amount of medium-chain dicarboxylic fatty acids which are essential regulators of all fatty acid oxidation pathways. Also involved in the degradation of long-chain dicarboxylic acids through peroxisomal beta-oxidation. This Mus musculus (Mouse) protein is Peroxisomal bifunctional enzyme.